A 344-amino-acid chain; its full sequence is Endoplasmic reticulum junction formation protein lunapark-1 (344 aa).

Topologically, residues 1 to 39 (MGNLFSRTKSPATELERVVLSIEDFKKRLQTISASNSST) are cytoplasmic. The chain crosses the membrane as a helical span at residues 40 to 60 (LYYYYMGVIIILSIAMAHTWL). Residues 61-68 (RFDDPTKT) lie on the Lumenal side of the membrane. A helical transmembrane segment spans residues 69–89 (YVACALVFGATVIVLTGRYII). Over 90–344 (NCFFAWRTNR…ADETAVVEKS (255 aa)) the chain is Cytoplasmic. A coiled-coil region spans residues 116–140 (DLVKETLKFKEAKEILDRYEEKTEA). Disordered regions lie at residues 136 to 155 (EKTEAGNTPTENSKLIHQQK) and 171 to 192 (QKRVETPVSQKPVPSKPGIAFD). Residues 140-155 (AGNTPTENSKLIHQQK) show a composition bias toward polar residues. The segment at 239 to 264 (CSICHTHNGMSVPAEYPFISFRCFEC) adopts a C4-type; plays a role in ER morphology zinc-finger fold. The tract at residues 275-344 (PHLPITRPPM…ADETAVVEKS (70 aa)) is disordered. Residues 312 to 326 (PNPSTDLTPSASQHG) show a composition bias toward polar residues. Residues 327 to 344 (SDSEPEKNADETAVVEKS) are compositionally biased toward basic and acidic residues.

It belongs to the lunapark family.

It localises to the endoplasmic reticulum membrane. Functionally, plays a role in tubular endoplasmic reticulum network formation and maintenance. May be involved in central nervous system development. Has a presynaptic role in neurotransmission. Likely to operate in synaptogenesis by regulating vesicular transport or localization. Required for correct localization of rab-3 and snb-1. In Caenorhabditis briggsae, this protein is Endoplasmic reticulum junction formation protein lunapark-1.